A 396-amino-acid chain; its full sequence is Elongation factor Tu (396 aa).

The tr-type G domain occupies 10–206; it reads KPHVNVGTIG…ALDSYIPEPE (197 aa). A G1 region spans residues 19–26; sequence GHVDHGKT. 19–26 is a GTP binding site; the sequence is GHVDHGKT. Thr-26 is a Mg(2+) binding site. Residues 60-64 form a G2 region; the sequence is GITIN. The tract at residues 81-84 is G3; it reads DCPG. Residues 81-85 and 136-139 each bind GTP; these read DCPGH and NKAD. The tract at residues 136–139 is G4; sequence NKAD. The segment at 174–176 is G5; that stretch reads SAL.

The protein belongs to the TRAFAC class translation factor GTPase superfamily. Classic translation factor GTPase family. EF-Tu/EF-1A subfamily. Monomer.

It is found in the cytoplasm. It carries out the reaction GTP + H2O = GDP + phosphate + H(+). GTP hydrolase that promotes the GTP-dependent binding of aminoacyl-tRNA to the A-site of ribosomes during protein biosynthesis. The polypeptide is Elongation factor Tu (Nitrosomonas europaea (strain ATCC 19718 / CIP 103999 / KCTC 2705 / NBRC 14298)).